The following is a 597-amino-acid chain: Proline--tRNA ligase (597 aa).

The protein belongs to the class-II aminoacyl-tRNA synthetase family. ProS type 1 subfamily. As to quaternary structure, homodimer.

Its subcellular location is the cytoplasm. It catalyses the reaction tRNA(Pro) + L-proline + ATP = L-prolyl-tRNA(Pro) + AMP + diphosphate. Catalyzes the attachment of proline to tRNA(Pro) in a two-step reaction: proline is first activated by ATP to form Pro-AMP and then transferred to the acceptor end of tRNA(Pro). As ProRS can inadvertently accommodate and process non-cognate amino acids such as alanine and cysteine, to avoid such errors it has two additional distinct editing activities against alanine. One activity is designated as 'pretransfer' editing and involves the tRNA(Pro)-independent hydrolysis of activated Ala-AMP. The other activity is designated 'posttransfer' editing and involves deacylation of mischarged Ala-tRNA(Pro). The misacylated Cys-tRNA(Pro) is not edited by ProRS. This is Proline--tRNA ligase from Bifidobacterium longum (strain NCC 2705).